Reading from the N-terminus, the 172-residue chain is Acetolactate synthase small subunit (172 aa).

An ACT domain is found at 4-79; sequence IITLTVVNRS…DVLKVTDITN (76 aa).

The protein belongs to the acetolactate synthase small subunit family. Dimer of large and small chains.

The enzyme catalyses 2 pyruvate + H(+) = (2S)-2-acetolactate + CO2. Its pathway is amino-acid biosynthesis; L-isoleucine biosynthesis; L-isoleucine from 2-oxobutanoate: step 1/4. The protein operates within amino-acid biosynthesis; L-valine biosynthesis; L-valine from pyruvate: step 1/4. This chain is Acetolactate synthase small subunit (ilvH), found in Bacillus subtilis (strain 168).